We begin with the raw amino-acid sequence, 395 residues long: Phosphoglycerate kinase (395 aa).

Residues 21–23, arginine 36, 59–62, arginine 113, and arginine 146 each bind substrate; these read DLN and HLGR. ATP-binding positions include lysine 197, glutamate 324, and 350 to 353; that span reads GGDT.

This sequence belongs to the phosphoglycerate kinase family. Monomer.

The protein resides in the cytoplasm. The catalysed reaction is (2R)-3-phosphoglycerate + ATP = (2R)-3-phospho-glyceroyl phosphate + ADP. It participates in carbohydrate degradation; glycolysis; pyruvate from D-glyceraldehyde 3-phosphate: step 2/5. In Acinetobacter baumannii (strain ACICU), this protein is Phosphoglycerate kinase.